We begin with the raw amino-acid sequence, 745 residues long: Elongation factor G, mitochondrial (745 aa).

Residues 40-317 (ERIRNIGISA…AVLDYLPNPG (278 aa)) form the tr-type G domain. GTP-binding positions include 49 to 56 (AHIDSGKT), 116 to 120 (DTPGH), and 170 to 173 (NKLD).

Belongs to the TRAFAC class translation factor GTPase superfamily. Classic translation factor GTPase family. EF-G/EF-2 subfamily.

It is found in the mitochondrion. Its pathway is protein biosynthesis; polypeptide chain elongation. Functionally, mitochondrial GTPase that catalyzes the GTP-dependent ribosomal translocation step during translation elongation. During this step, the ribosome changes from the pre-translocational (PRE) to the post-translocational (POST) state as the newly formed A-site-bound peptidyl-tRNA and P-site-bound deacylated tRNA move to the P and E sites, respectively. Catalyzes the coordinated movement of the two tRNA molecules, the mRNA and conformational changes in the ribosome. Essential during development as it acts as a retrograde signal from mitochondria to the nucleus to slow down cell proliferation if mitochondrial energy output is low. This is Elongation factor G, mitochondrial from Drosophila yakuba (Fruit fly).